We begin with the raw amino-acid sequence, 205 residues long: MSAGLPIRTATVTRNTNETQIVCSISLDHTPGVDQQIIDIQTGIGFLNHMLHAMAKHGNMSLTLHCKGDLEIDDHHTAEDCALALGEAFKLALGERRGIRRYGTGFAPLDEALSRAVLDISSRPYFCGDLPFTREKIGDLSTEMIPHVFESFATAAGVTLHVDCIRGVNNHHIAEASFKALALAIREAITRTGGNDVPSTKGVLL.

The protein belongs to the imidazoleglycerol-phosphate dehydratase family.

It catalyses the reaction D-erythro-1-(imidazol-4-yl)glycerol 3-phosphate = 3-(imidazol-4-yl)-2-oxopropyl phosphate + H2O. It functions in the pathway amino-acid biosynthesis; L-histidine biosynthesis; L-histidine from 5-phospho-alpha-D-ribose 1-diphosphate: step 6/9. The polypeptide is Imidazoleglycerol-phosphate dehydratase (HIS3) (Phaffia rhodozyma (Yeast)).